Consider the following 870-residue polypeptide: Leucine--tRNA ligase (870 aa).

The 'HIGH' region signature appears at 43-53 (PYPSGRLHMGH). The 'KMSKS' region signature appears at 626–630 (KMSKS). ATP is bound at residue lysine 629.

Belongs to the class-I aminoacyl-tRNA synthetase family.

Its subcellular location is the cytoplasm. The enzyme catalyses tRNA(Leu) + L-leucine + ATP = L-leucyl-tRNA(Leu) + AMP + diphosphate. In Pseudoalteromonas atlantica (strain T6c / ATCC BAA-1087), this protein is Leucine--tRNA ligase.